We begin with the raw amino-acid sequence, 192 residues long: MSEKAVRRKLVIIGDGACGKTSLLYVFTLGKFPEQYHPTVFENYVTDCRVDGIKVSLTLWDTAGQEEYERLRPFSYSKADIILIGFAVDNFESLINARTKWADEALRYCPDAPIVLVGLKKDLRQEAHFKENATDEMVPIEDAKQVARAIGAKKYMECSALTGEGVDDVFEVATRTSLLMKKEPGANCCIIL.

Residue 14 to 21 (GDGACGKT) participates in GTP binding. The short motif at 36–44 (YHPTVFENY) is the Effector region element. GTP is bound by residues 61–65 (DTAGQ) and 119–122 (LKKD). Residue Cys-188 is the site of S-palmitoyl cysteine attachment. Cys-189 is modified (cysteine methyl ester). Cys-189 carries S-geranylgeranyl cysteine lipidation. Residues 190–192 (IIL) constitute a propeptide, removed in mature form.

The protein belongs to the small GTPase superfamily. Rho family. As to quaternary structure, interacts with BEM4.

The protein localises to the cell membrane. It carries out the reaction GTP + H2O = GDP + phosphate + H(+). The polypeptide is GTP-binding protein RHO2 (RHO2) (Saccharomyces cerevisiae (strain ATCC 204508 / S288c) (Baker's yeast)).